The sequence spans 366 residues: UDP-N-acetylenolpyruvoylglucosamine reductase (366 aa).

The FAD-binding PCMH-type domain maps to 27–197 (LGGPAAGFVV…LRVRFLLRDG (171 aa)). Arg175 is a catalytic residue. The Proton donor role is filled by Ser252. Glu358 is an active-site residue.

It belongs to the MurB family. Requires FAD as cofactor.

Its subcellular location is the cytoplasm. It carries out the reaction UDP-N-acetyl-alpha-D-muramate + NADP(+) = UDP-N-acetyl-3-O-(1-carboxyvinyl)-alpha-D-glucosamine + NADPH + H(+). It functions in the pathway cell wall biogenesis; peptidoglycan biosynthesis. Its function is as follows. Cell wall formation. The protein is UDP-N-acetylenolpyruvoylglucosamine reductase of Saccharopolyspora erythraea (strain ATCC 11635 / DSM 40517 / JCM 4748 / NBRC 13426 / NCIMB 8594 / NRRL 2338).